The primary structure comprises 188 residues: Probable chorismate pyruvate-lyase (188 aa).

Positions 77, 115, and 174 each coordinate substrate.

It belongs to the UbiC family.

It is found in the cytoplasm. The enzyme catalyses chorismate = 4-hydroxybenzoate + pyruvate. The protein operates within cofactor biosynthesis; ubiquinone biosynthesis. Functionally, removes the pyruvyl group from chorismate, with concomitant aromatization of the ring, to provide 4-hydroxybenzoate (4HB) for the ubiquinone pathway. In Shewanella loihica (strain ATCC BAA-1088 / PV-4), this protein is Probable chorismate pyruvate-lyase.